The sequence spans 66 residues: Large ribosomal subunit protein bL35 (66 aa).

The protein belongs to the bacterial ribosomal protein bL35 family.

This Beijerinckia indica subsp. indica (strain ATCC 9039 / DSM 1715 / NCIMB 8712) protein is Large ribosomal subunit protein bL35.